Reading from the N-terminus, the 677-residue chain is WD and tetratricopeptide repeats protein 1 (677 aa).

WD repeat units lie at residues 45–84, 88–129, 132–172, 182–222, and 265–305; these read GHSG…KLLS, GHTA…TIHM, DHTN…KHSE, GQLV…NHRK, and RLRV…RPYT. Residue Ser353 is modified to Phosphoserine. 2 TPR repeats span residues 362 to 395 and 397 to 432; these read LERV…APHN and MLYG…NPCH. The segment at 487–509 is disordered; sequence NDGEEKKGPGGGAPVRLRSTSRK. A Phosphoserine modification is found at Ser511. WD repeat units lie at residues 535–575 and 578–617; these read NTTT…LVRV and GDES…EDLT. A disordered region spans residues 655–677; the sequence is SSGGAGASDDEDSSEGQVQCRPS.

Its pathway is protein modification; protein ubiquitination. May function as a substrate receptor for CUL4-DDB1 E3 ubiquitin-protein ligase complex. The chain is WD and tetratricopeptide repeats protein 1 (WDTC1) from Homo sapiens (Human).